The following is a 182-amino-acid chain: Vacuolar protein sorting-associated protein 29 (182 aa).

An N6-acetyllysine modification is found at Lys50.

It belongs to the VPS29 family. Component of the commander complex consisting of the CCC subcomplex and the retriever subcomplex. Component of the heterotrimeric retriever complex formed by VPS26C, VPS29 and VPS35L; within the complex interacts with VPS35L. Component of the heterotrimeric retromer cargo-selective complex (CSC), also described as vacuolar protein sorting subcomplex (VPS) formed by VPS26 (VPS26A or VPS26B), VPS29 and VPS35. The CSC has a highly elongated structure with VPS26 and VPS29 binding independently at opposite distal ends of VPS35 as central platform. The CSC is believed to associate with variable sorting nexins to form functionally distinct retromer complex variants. The originally described retromer complex (also called SNX-BAR retromer) is a pentamer containing the CSC and a heterodimeric membrane-deforming subcomplex formed between SNX1 or SNX2 and SNX5 or SNX6 (also called SNX-BAR subcomplex); the respective CSC and SNX-BAR subcomplexes associate with low affinity. The CSC associates with SNX3 to form a SNX3-retromer complex. The CSC associates with SNX27, the WASH complex and the SNX-BAR subcomplex to form the SNX27-retromer complex. Interacts with VPS26A, VPS35, SNX1, SNX2, SNX3, SNX27, WASHC5. Interacts with TBC1D5; this interaction is blocked by VPS35L in the retriever complex. Interacts with SNX17; the interaction is indirect; SNX17 (via its C-terminus) interacts with the retriever complex (via VPS26C and VPS35L). Interacts with VPS26B and ANKRD27.

The protein resides in the cytoplasm. The protein localises to the membrane. It localises to the endosome membrane. Functionally, component of the commander complex that is essential for endosomal recycling of transmembrane cargos; the commander complex is composed of the CCC subcomplex and the retriever subcomplex. Component of the retriever complex, which is a heterotrimeric complex related to retromer cargo-selective complex (CSC) and essential for retromer-independent retrieval and recycling of numerous cargos such as integrin alpha-5/beta-1 (ITGA5:ITGB1). Component of the retromer cargo-selective complex (CSC). The CSC is believed to be the core functional component of retromer or respective retromer complex variants acting to prevent missorting of selected transmembrane cargo proteins into the lysosomal degradation pathway. The recruitment of the CSC to the endosomal membrane involves RAB7A and SNX3. The SNX-BAR retromer mediates retrograde transport of cargo proteins from endosomes to the trans-Golgi network (TGN) and is involved in endosome-to-plasma membrane transport for cargo protein recycling. The SNX3-retromer mediates the retrograde endosome-to-TGN transport of WLS distinct from the SNX-BAR retromer pathway. The SNX27-retromer is believed to be involved in endosome-to-plasma membrane trafficking and recycling of a broad spectrum of cargo proteins. The CSC seems to act as recruitment hub for other proteins, such as the WASH complex and TBC1D5. Required to regulate transcytosis of the polymeric immunoglobulin receptor (pIgR-pIgA). In the endosomes, retriever complex drives the retrieval and recycling of NxxY-motif-containing cargo proteins by coupling to SNX17, a cargo essential for the homeostatic maintenance of numerous cell surface proteins associated with processes that include cell migration, cell adhesion, nutrient supply and cell signaling. The recruitment of the retriever complex to the endosomal membrane involves CCC and WASH complexes. Involved in GLUT1 endosome-to-plasma membrane trafficking; the function is dependent of association with ANKRD27. This chain is Vacuolar protein sorting-associated protein 29 (Vps29), found in Mus musculus (Mouse).